The sequence spans 386 residues: MKIHEYQGKEILRNFGVPVPRGIPAFTVQEAVEAAQKLGGPVWVVKAQIHAGGRGKGGGVKVAKTIDDVKRIAGEILGMQLKTHQTGPEGQKVRRLYIEDGADIQKEYYVSAVTDRESQKVAFIASSEGGMDIEEVAHSNPEKIIKVFVDPLVGMTDAQAKEVAAGIGMPADSVAQTVDVLQKLYKCYMETDASLVEINPLNRNSKGEIMALDAKFNFDANALFRHPEIVAYRDLDEEDPAEVEASKFDLAYISLDGNIGCLVNGAGLAMATMDTIKLFGGEPANFLDVGGGATAEKVTEAFKIMLKNPEVKGILVNIFGGIMKCDTIADGVITACKAVNLSVPLVVRMKGTNEDLGKKMLADSGLPIIAADTMAEAATKIVAAVK.

Positions 9-244 constitute an ATP-grasp domain; sequence KEILRNFGVP…LDEEDPAEVE (236 aa). Residues Lys-46, 53–55, Glu-99, Ala-102, and Glu-107 contribute to the ATP site; that span reads GRG. 2 residues coordinate Mg(2+): Asn-199 and Asp-213. Substrate-binding positions include Asn-264 and 321-323; that span reads GIM.

The protein belongs to the succinate/malate CoA ligase beta subunit family. As to quaternary structure, heterotetramer of two alpha and two beta subunits. Mg(2+) is required as a cofactor.

It catalyses the reaction succinate + ATP + CoA = succinyl-CoA + ADP + phosphate. The catalysed reaction is GTP + succinate + CoA = succinyl-CoA + GDP + phosphate. It functions in the pathway carbohydrate metabolism; tricarboxylic acid cycle; succinate from succinyl-CoA (ligase route): step 1/1. Succinyl-CoA synthetase functions in the citric acid cycle (TCA), coupling the hydrolysis of succinyl-CoA to the synthesis of either ATP or GTP and thus represents the only step of substrate-level phosphorylation in the TCA. The beta subunit provides nucleotide specificity of the enzyme and binds the substrate succinate, while the binding sites for coenzyme A and phosphate are found in the alpha subunit. The sequence is that of Succinate--CoA ligase [ADP-forming] subunit beta from Polaromonas sp. (strain JS666 / ATCC BAA-500).